The following is a 193-amino-acid chain: Potassium-transporting ATPase KdpC subunit (193 aa).

Residues 14-34 (ITFTFLVLCGLVYPLIVTGIA) traverse the membrane as a helical segment.

Belongs to the KdpC family. In terms of assembly, the system is composed of three essential subunits: KdpA, KdpB and KdpC.

Its subcellular location is the cell membrane. Functionally, part of the high-affinity ATP-driven potassium transport (or Kdp) system, which catalyzes the hydrolysis of ATP coupled with the electrogenic transport of potassium into the cytoplasm. This subunit acts as a catalytic chaperone that increases the ATP-binding affinity of the ATP-hydrolyzing subunit KdpB by the formation of a transient KdpB/KdpC/ATP ternary complex. This Bacillus cereus (strain B4264) protein is Potassium-transporting ATPase KdpC subunit.